The chain runs to 601 residues: MEGADLLTAGVLFLFAAVAAVPLAARLGIGAVLGYLLAGIAIGPWGLGFISDVDEILHFSELGVVFLMFIIGLELNPSRLWQLRRSIFGVGAAQVLLSAAVLAGLLMLADFLWQAAVVGGIGLAMSSTAMALQLMREKGMNRSESGQLGFSVLLFQDLAVIPALALVPLLAGSADEHFDWFKVAMKVLAFAVMLIGGRYLLRPVFRFIAASGVREVFTAATLLLVLSAALFMDALGLSMALGTFIAGVLLAESEYRHELENAIDPFKGLLLGLFFISVGMSLNLGVLYTHLLWVAASVVILVVIKMLTLYLLARLYGIRSSERMQFASVLSQGGEFAFVLFSTASSQRLFQGDQMALLLVTVTLSMMTTPLLMKGIDKWLSRRLNGPEENDEKPWVEDDKPQVIVVGFGRFGQVIARLLMANKMRITVLERDIGAVNLMRKYGYKVYYGDATQVELLRSAGAEAAESIVITCNEPEDTMKLVELCQQHFPHLHILARARGRVEAHELLQAGVTQFSRETFSSALELGRKTLVSLGMHPHQAQRAQLHFRRLDMRMLRELIPEHSDMVQISRAREARRELEEIFQREMQQERRQLDGWDEFE.

Transmembrane regions (helical) follow at residues 4–24, 29–49, 55–75, 87–107, 111–131, 152–172, 177–197, 207–227, 230–250, 262–282, 284–304, 324–344, and 356–376; these read ADLL…VPLA, IGAV…GLGF, EILH…GLEL, IFGV…GLLM, FLWQ…TAMA, VLLF…LLAG, HFDW…LIGG, FIAA…LVLS, LFMD…GVLL, AIDP…GMSL, LGVL…LVVI, MQFA…FSTA, and ALLL…MKGI. An RCK N-terminal domain is found at 400-519; that stretch reads KPQVIVVGFG…AGVTQFSRET (120 aa).

This sequence belongs to the monovalent cation:proton antiporter 2 (CPA2) transporter (TC 2.A.37) family. KefB subfamily. In terms of assembly, interacts with the regulatory subunit KefG.

It is found in the cell inner membrane. Pore-forming subunit of a potassium efflux system that confers protection against electrophiles. Catalyzes K(+)/H(+) antiport. The polypeptide is Glutathione-regulated potassium-efflux system protein KefB (Salmonella enteritidis PT4 (strain P125109)).